We begin with the raw amino-acid sequence, 499 residues long: Hepatic triacylglycerol lipase (499 aa).

A signal peptide spans 1–22; the sequence is MDTSPLCFSILLVLCIFIQSSA. N-linked (GlcNAc...) asparagine glycans are attached at residues asparagine 42 and asparagine 78. Serine 168 (nucleophile) is an active-site residue. Aspartate 194 acts as the Charge relay system in catalysis. The essential for determining substrate specificity stretch occupies residues 254 to 277; that stretch reads CHFLELYRHIAQHGFNAITQTIKC. Histidine 279 functions as the Charge relay system in the catalytic mechanism. The 135-residue stretch at 352–486 folds into the PLAT domain; the sequence is YHYQFKIQFI…RPTQEKIFVK (135 aa). N-linked (GlcNAc...) asparagine glycans are attached at residues asparagine 362 and asparagine 397.

The protein belongs to the AB hydrolase superfamily. Lipase family. As to quaternary structure, homodimer.

The protein localises to the secreted. It catalyses the reaction a triacylglycerol + H2O = a diacylglycerol + a fatty acid + H(+). The enzyme catalyses a 1-acyl-sn-glycero-3-phosphocholine + H2O = sn-glycerol 3-phosphocholine + a fatty acid + H(+). The catalysed reaction is a 1,2-diacyl-sn-glycero-3-phosphocholine + H2O = a 2-acyl-sn-glycero-3-phosphocholine + a fatty acid + H(+). It carries out the reaction 1,2,3-tri-(9Z-octadecenoyl)-glycerol + H2O = di-(9Z)-octadecenoylglycerol + (9Z)-octadecenoate + H(+). It catalyses the reaction 1,2-di-(9Z-octadecenoyl)-sn-glycero-3-phosphocholine + H2O = (9Z-octadecenoyl)-sn-glycero-3-phosphocholine + (9Z)-octadecenoate + H(+). The enzyme catalyses 1,2,3-tributanoylglycerol + H2O = dibutanoylglycerol + butanoate + H(+). The catalysed reaction is 1,2-dihexadecanoyl-sn-glycero-3-phosphocholine + H2O = hexadecanoyl-sn-glycero-3-phosphocholine + hexadecanoate + H(+). It carries out the reaction 1,2-di-(9Z-octadecenoyl)-sn-glycerol + H2O = 2-(9Z-octadecenoyl)-glycerol + (9Z)-octadecenoate + H(+). It catalyses the reaction 1,2,3-tri-(9Z-octadecenoyl)-glycerol + H2O = 2,3-di-(9Z)-octadecenoyl-sn-glycerol + (9Z)-octadecenoate + H(+). The enzyme catalyses 1-(9Z-octadecenoyl)-sn-glycero-3-phospho-L-serine + H2O = sn-glycero-3-phospho-L-serine + (9Z)-octadecenoate + H(+). The catalysed reaction is 1-hexadecanoyl-sn-glycero-3-phosphocholine + H2O = sn-glycerol 3-phosphocholine + hexadecanoate + H(+). It carries out the reaction 1,3-di-(9Z-octadecenoyl)-glycerol + H2O = 3-(9Z-octadecenoyl)-sn-glycerol + (9Z)-octadecenoate + H(+). Its activity is regulated as follows. Phospholipase A1 and triacylglycerol lipase are inhibited by sphingomyelin. Functionally, catalyzes the hydrolysis of triglycerides and phospholipids present in circulating plasma lipoproteins, including chylomicrons, intermediate density lipoproteins (IDL), low density lipoproteins (LDL) of large size and high density lipoproteins (HDL), releasing free fatty acids (FFA) and smaller lipoprotein particles. Also exhibits lysophospholipase activity. Can hydrolyze both neutral lipid and phospholipid substrates but shows a greater binding affinity for neutral lipid substrates than phospholipid substrates. In native LDL, preferentially hydrolyzes the phosphatidylcholine species containing polyunsaturated fatty acids at sn-2 position. In Homo sapiens (Human), this protein is Hepatic triacylglycerol lipase (LIPC).